We begin with the raw amino-acid sequence, 277 residues long: Inositol monophosphatase 1 (277 aa).

Residues E70, D90, I92, and D93 each contribute to the Mg(2+) site. Residue E70 coordinates substrate. 92-95 (IDGT) is a binding site for substrate. T168 carries the phosphothreonine modification. Residues 194–196 (GTA), E213, and D220 each bind substrate. Residue D220 participates in Mg(2+) binding.

It belongs to the inositol monophosphatase superfamily. As to quaternary structure, homodimer. It depends on Mg(2+) as a cofactor. In terms of processing, the N-terminus is blocked.

The protein resides in the cytoplasm. It catalyses the reaction a myo-inositol phosphate + H2O = myo-inositol + phosphate. The catalysed reaction is 1D-myo-inositol 1-phosphate + H2O = myo-inositol + phosphate. The enzyme catalyses 1D-myo-inositol 2-phosphate + H2O = myo-inositol + phosphate. It carries out the reaction 1D-myo-inositol 3-phosphate + H2O = myo-inositol + phosphate. It catalyses the reaction 1D-myo-inositol 4-phosphate + H2O = myo-inositol + phosphate. The catalysed reaction is 1D-myo-inositol 5-phosphate + H2O = myo-inositol + phosphate. The enzyme catalyses 1D-myo-inositol 6-phosphate + H2O = myo-inositol + phosphate. It carries out the reaction scyllo-inositol 1-phosphate + H2O = scyllo-inositol + phosphate. It catalyses the reaction alpha-D-galactose 1-phosphate + H2O = D-galactose + phosphate. The catalysed reaction is alpha-D-glucose 1-phosphate + H2O = D-glucose + phosphate. The enzyme catalyses D-glucose 6-phosphate + H2O = D-glucose + phosphate. It carries out the reaction beta-D-fructose 1-phosphate + H2O = D-fructose + phosphate. It catalyses the reaction glycerol 2-phosphate + H2O = glycerol + phosphate. The catalysed reaction is adenosine 2'-phosphate + H2O = adenosine + phosphate. The protein operates within polyol metabolism; myo-inositol biosynthesis; myo-inositol from D-glucose 6-phosphate: step 2/2. Activity with myo-inositol monophosphate and D-galactose 1-phosphate is inhibited by Li(+), Ca(2+) and Mn(2+), but also by Mg(2+) at concentrations above 3 mM. Phosphatase involved in the dephosphorylation of myo-inositol monophosphate to generate myo-inositol. Is also able to dephosphorylate scyllo-inositol-phosphate, myo-inositol 1,4-diphosphate, scyllo-inositol-1,3-diphosphate and scyllo-inositol-1,4-diphosphate. Also dephosphorylates in vitro other sugar-phosphates including D-galactose-1-phosphate, glucose-1-phosphate, glucose-6-phosphate, fructose-1-phosphate, beta-glycerophosphate and 2'-AMP. Responsible for the provision of inositol required for synthesis of phosphatidylinositol and polyphosphoinositides, and involved in maintaining normal brain function. Has been implicated as the pharmacological target for lithium Li(+) action in brain. Is equally active with myo-inositol monophosphate and D-galactose 1-phosphate. In Bos taurus (Bovine), this protein is Inositol monophosphatase 1 (IMPA1).